The following is a 238-amino-acid chain: End-binding protein 1 (238 aa).

The 103-residue stretch at 15 to 117 (FVGRVSLLKW…FFQWFKWFFD (103 aa)) folds into the Calponin-homology (CH) domain. The interval 101–238 (KYMDNFEFFQ…EDILYAEYHQ (138 aa)) is interaction with aurora kinase. Over residues 124 to 165 (KSGATESGSANAVTKTSKPGNRSGSTAASMQNPKASSTSGPS) the composition is skewed to polar residues. The segment at 124 to 169 (KSGATESGSANAVTKTSKPGNRSGSTAASMQNPKASSTSGPSIDSK) is disordered. Ser148 is modified (phosphoserine). The EB1 C-terminal domain occupies 156 to 238 (PKASSTSGPS…EDILYAEYHQ (83 aa)).

This sequence belongs to the MAPRE family. As to quaternary structure, homodimer; disulfide-linked and via interaction of the C-terminal EB1-specific domains. Interacts with BOP1 (via C-terminal WD repeats). Interacts with giardin subunit gamma, neurogenic locus notch homolog protein, GL50803_8358 and GL50803_11327. Interacts (via C-terminal residues 101-238) with aurora kinase. Interacts with tubulin gamma chain. Post-translationally, phosphorylated in vitro by aurora kinase. Phosphorylation is important for cell division.

The protein resides in the nucleus membrane. Its subcellular location is the cytoplasm. It is found in the cytoskeleton. It localises to the spindle. The protein localises to the nucleus envelope. The protein resides in the flagellum axoneme. Its subcellular location is the cell projection. It is found in the cilium. It localises to the flagellum. In terms of biological role, involved in cell division. Involved in mitosis. Regulates dynamics of microtubules (MTs) during mitosis. Required for cytokinesis. Binds polymerized MTs in vitro. Is able to rescue a mitotic division defect, the proper positioning of the nucleus, of the S.cerevisiae BIM1 knockout mutant in a complementation assay. May play a role in spindle positioning and MT distribution. May be involved in MT nucleation for the formation of median bodies and in the biogenesis of flagella. Based on its localization to both the flagellar exit point and the distal flagellar tips, it may mediate the transition from anterograde to retrograde intraflagellar transport (IFT). In Giardia intestinalis (strain ATCC 50803 / WB clone C6) (Giardia lamblia), this protein is End-binding protein 1.